The chain runs to 255 residues: ATP synthase subunit a (255 aa).

Helical transmembrane passes span 40–60 (TEPI…ASEV), 109–129 (LIGG…IPGV), 135–155 (NLNI…YYGL), 163–183 (VAHL…IEVI), 196–218 (LMLN…ALFV), and 230–250 (IVVQ…LATE).

This sequence belongs to the ATPase A chain family. In terms of assembly, F-type ATPases have 2 components, CF(1) - the catalytic core - and CF(0) - the membrane proton channel. CF(1) has five subunits: alpha(3), beta(3), gamma(1), delta(1), epsilon(1). CF(0) has three main subunits: a(1), b(2) and c(9-12). The alpha and beta chains form an alternating ring which encloses part of the gamma chain. CF(1) is attached to CF(0) by a central stalk formed by the gamma and epsilon chains, while a peripheral stalk is formed by the delta and b chains.

It is found in the cell inner membrane. Key component of the proton channel; it plays a direct role in the translocation of protons across the membrane. The chain is ATP synthase subunit a from Sorangium cellulosum (strain So ce56) (Polyangium cellulosum (strain So ce56)).